We begin with the raw amino-acid sequence, 219 residues long: Glycerol-3-phosphate acyltransferase 2 (219 aa).

The next 5 membrane-spanning stretches (helical) occupy residues 1–21 (MVFWIAGAVGLAIAYLLGSTP), 55–75 (WPALVVLLVDVLKGVGAVVFA), 93–113 (ALDLQSLEPWAVCLTGLAVLL), 135–155 (VLLAMSWPVGLGAAMVFGVAL), and 160–180 (IVSLSSMLAALTAIALVCGLE).

It belongs to the PlsY family. Probably interacts with PlsX.

Its subcellular location is the cell inner membrane. It catalyses the reaction an acyl phosphate + sn-glycerol 3-phosphate = a 1-acyl-sn-glycero-3-phosphate + phosphate. Its pathway is lipid metabolism; phospholipid metabolism. Its function is as follows. Catalyzes the transfer of an acyl group from acyl-phosphate (acyl-PO(4)) to glycerol-3-phosphate (G3P) to form lysophosphatidic acid (LPA). This enzyme utilizes acyl-phosphate as fatty acyl donor, but not acyl-CoA or acyl-ACP. In Rhizobium johnstonii (strain DSM 114642 / LMG 32736 / 3841) (Rhizobium leguminosarum bv. viciae), this protein is Glycerol-3-phosphate acyltransferase 2.